Reading from the N-terminus, the 27-residue chain is uncharacterized protein (27 aa).

It is found in the plastid. The protein resides in the cyanelle. This is an uncharacterized protein from Cyanophora paradoxa.